The following is an 89-amino-acid chain: Small ribosomal subunit protein uS15 (89 aa).

Belongs to the universal ribosomal protein uS15 family. Part of the 30S ribosomal subunit. Forms a bridge to the 50S subunit in the 70S ribosome, contacting the 23S rRNA.

Its function is as follows. One of the primary rRNA binding proteins, it binds directly to 16S rRNA where it helps nucleate assembly of the platform of the 30S subunit by binding and bridging several RNA helices of the 16S rRNA. Forms an intersubunit bridge (bridge B4) with the 23S rRNA of the 50S subunit in the ribosome. This is Small ribosomal subunit protein uS15 from Chloroherpeton thalassium (strain ATCC 35110 / GB-78).